The following is a 338-amino-acid chain: UDP-3-O-acylglucosamine N-acyltransferase (338 aa).

The active-site Proton acceptor is the H239.

It belongs to the transferase hexapeptide repeat family. LpxD subfamily. In terms of assembly, homotrimer.

The catalysed reaction is a UDP-3-O-[(3R)-3-hydroxyacyl]-alpha-D-glucosamine + a (3R)-hydroxyacyl-[ACP] = a UDP-2-N,3-O-bis[(3R)-3-hydroxyacyl]-alpha-D-glucosamine + holo-[ACP] + H(+). Its pathway is bacterial outer membrane biogenesis; LPS lipid A biosynthesis. Functionally, catalyzes the N-acylation of UDP-3-O-acylglucosamine using 3-hydroxyacyl-ACP as the acyl donor. Is involved in the biosynthesis of lipid A, a phosphorylated glycolipid that anchors the lipopolysaccharide to the outer membrane of the cell. This chain is UDP-3-O-acylglucosamine N-acyltransferase, found in Thermosynechococcus vestitus (strain NIES-2133 / IAM M-273 / BP-1).